Here is a 307-residue protein sequence, read N- to C-terminus: MNENAGRSLAPQASEGLGTPRDYISLLKPRVMSLVIFTALVGLVRAPDHVHPVIAFTAILCIAVGAGAAGALNMWWDADIDAVMSRTQRRPIPAGRVTPREALAFGLTLAAFSVVVLGLLVNVLAGALLAFTIFFYVVVYTMWLKRSTPQNIVIGGLSGALPPMVAWAAASGSISLESVILVAIIFFWTPPHFWALSLYRADDYARAGVPMLPVTAGPDETRKQILLYTLFLVPLALSPVMLGEAGLAYGVVAGVTGLGMLLLAVNVYRRRTGPAAVTAAKKLFGFSILYLFLLFATLLAEALVRGM.

Transmembrane regions (helical) follow at residues 24 to 44 (ISLL…VGLV), 52 to 72 (PVIA…AGAL), 115 to 135 (VVLG…TIFF), 152 to 172 (IVIG…AASG), 179 to 199 (VILV…LSLY), 224 to 244 (QILL…MLGE), 245 to 265 (AGLA…LLAV), and 284 to 304 (FGFS…EALV).

This sequence belongs to the UbiA prenyltransferase family. Protoheme IX farnesyltransferase subfamily.

The protein localises to the cell inner membrane. It carries out the reaction heme b + (2E,6E)-farnesyl diphosphate + H2O = Fe(II)-heme o + diphosphate. Its pathway is porphyrin-containing compound metabolism; heme O biosynthesis; heme O from protoheme: step 1/1. Functionally, converts heme B (protoheme IX) to heme O by substitution of the vinyl group on carbon 2 of heme B porphyrin ring with a hydroxyethyl farnesyl side group. The polypeptide is Protoheme IX farnesyltransferase (Azorhizobium caulinodans (strain ATCC 43989 / DSM 5975 / JCM 20966 / LMG 6465 / NBRC 14845 / NCIMB 13405 / ORS 571)).